A 407-amino-acid chain; its full sequence is Putative replication protein A (407 aa).

This sequence belongs to the ParA family.

The protein is Putative replication protein A of Sinorhizobium fredii (strain NBRC 101917 / NGR234).